A 262-amino-acid polypeptide reads, in one-letter code: Acyl-[acyl-carrier-protein]--UDP-N-acetylglucosamine O-acyltransferase (262 aa).

Belongs to the transferase hexapeptide repeat family. LpxA subfamily. In terms of assembly, homotrimer.

Its subcellular location is the cytoplasm. It carries out the reaction a (3R)-hydroxyacyl-[ACP] + UDP-N-acetyl-alpha-D-glucosamine = a UDP-3-O-[(3R)-3-hydroxyacyl]-N-acetyl-alpha-D-glucosamine + holo-[ACP]. The protein operates within glycolipid biosynthesis; lipid IV(A) biosynthesis; lipid IV(A) from (3R)-3-hydroxytetradecanoyl-[acyl-carrier-protein] and UDP-N-acetyl-alpha-D-glucosamine: step 1/6. In terms of biological role, involved in the biosynthesis of lipid A, a phosphorylated glycolipid that anchors the lipopolysaccharide to the outer membrane of the cell. In Histophilus somni (strain 2336) (Haemophilus somnus), this protein is Acyl-[acyl-carrier-protein]--UDP-N-acetylglucosamine O-acyltransferase.